A 447-amino-acid polypeptide reads, in one-letter code: UPF0210 protein lhv_0606 (447 aa).

Belongs to the UPF0210 family. In terms of assembly, homodimer.

This chain is UPF0210 protein lhv_0606, found in Lactobacillus helveticus (strain DPC 4571).